The primary structure comprises 179 residues: MNKLFVLLIALLGLTAAMRDQSIAVKGRLLCGNGPAANVRVKLWEEDTGPDPDDLLDQGYTDANGEFSLQGGTAELTPIDPVFKVYHKCDDSKLKPGARKVKLALPKSYITSGKVAKKTFDIGVLNLETVFAKEERELLVSRRRRGGFNADYMDPDNSEKDQSKSSEESEDKEKTVETF.

The signal sequence occupies residues 1–17 (MNKLFVLLIALLGLTAA). The disordered stretch occupies residues 144-179 (RRGGFNADYMDPDNSEKDQSKSSEESEDKEKTVETF). The span at 157-179 (NSEKDQSKSSEESEDKEKTVETF) shows a compositional bias: basic and acidic residues.

It belongs to the nematode transthyretin-like family.

The protein resides in the secreted. The polypeptide is Transthyretin-like protein 46 (ttr-46) (Caenorhabditis elegans).